The primary structure comprises 31 residues: Cytochrome b6-f complex subunit 6 (31 aa).

A helical transmembrane segment spans residues 4 to 26 (ITSYFGFLLAASTITTALFIGLS).

Belongs to the PetL family. In terms of assembly, the 4 large subunits of the cytochrome b6-f complex are cytochrome b6, subunit IV (17 kDa polypeptide, PetD), cytochrome f and the Rieske protein, while the 4 small subunits are PetG, PetL, PetM and PetN. The complex functions as a dimer.

The protein localises to the plastid. The protein resides in the chloroplast thylakoid membrane. Its function is as follows. Component of the cytochrome b6-f complex, which mediates electron transfer between photosystem II (PSII) and photosystem I (PSI), cyclic electron flow around PSI, and state transitions. PetL is important for photoautotrophic growth as well as for electron transfer efficiency and stability of the cytochrome b6-f complex. In Acorus calamus (Sweet flag), this protein is Cytochrome b6-f complex subunit 6.